The following is a 588-amino-acid chain: Urease subunit alpha (588 aa).

The Urease domain occupies 149-588 (GGIDTHIHFI…LPMAQRYFLF (440 aa)). Ni(2+)-binding residues include H154, H156, and K237. Residue K237 is modified to N6-carboxylysine. H239 serves as a coordination point for substrate. The Ni(2+) site is built by H266 and H292. Residue H340 is the Proton donor of the active site. D380 contributes to the Ni(2+) binding site.

The protein belongs to the metallo-dependent hydrolases superfamily. Urease alpha subunit family. In terms of assembly, heterotrimer of UreA (gamma), UreB (beta) and UreC (alpha) subunits. Three heterotrimers associate to form the active enzyme. Ni cation is required as a cofactor. Carboxylation allows a single lysine to coordinate two nickel ions.

The protein resides in the cytoplasm. It carries out the reaction urea + 2 H2O + H(+) = hydrogencarbonate + 2 NH4(+). The protein operates within nitrogen metabolism; urea degradation; CO(2) and NH(3) from urea (urease route): step 1/1. In Opitutus terrae (strain DSM 11246 / JCM 15787 / PB90-1), this protein is Urease subunit alpha.